The following is a 370-amino-acid chain: Cobalt-precorrin-5B C(1)-methyltransferase (370 aa).

This sequence belongs to the CbiD family.

It carries out the reaction Co-precorrin-5B + S-adenosyl-L-methionine = Co-precorrin-6A + S-adenosyl-L-homocysteine. It participates in cofactor biosynthesis; adenosylcobalamin biosynthesis; cob(II)yrinate a,c-diamide from sirohydrochlorin (anaerobic route): step 6/10. Catalyzes the methylation of C-1 in cobalt-precorrin-5B to form cobalt-precorrin-6A. This chain is Cobalt-precorrin-5B C(1)-methyltransferase, found in Prochlorococcus marinus (strain MIT 9312).